A 238-amino-acid polypeptide reads, in one-letter code: IkB-like protein (238 aa).

4 ANK repeats span residues 48 to 77, 86 to 115, 123 to 152, and 157 to 187; these read GSSV…PGEI, DGNS…KNGT, NGMT…DPTQ, and RGFT…PLYM. A Nuclear localization signal motif is present at residues 80-86; it reads PHRRDKD. The Nuclear localization signal signature appears at 202 to 213; it reads KKKPKIIITGCK. The PxIxITxC motif; Interaction with host PPP3CA motif lies at 205–212; the sequence is PKIIITGC. The FLCV motif signature appears at 227-230; sequence FLCV.

Belongs to the asfivirus A238L family. As to quaternary structure, interacts with host PPIA. Interacts with host PPP3CA/Calcineurin. Interacts with host RELA/p65; interaction of the 32 kDa form with host RELA results in the formation of a stable complex with NF-kappa-B. Interacts with host PPP3R1. Interacts with host EP300; this interaction inhibits the association of host EP300 with host RELA, JUN and NFATC2. The protein exists in a 28 kDa and a 32 kDa form, probably due to post-translational modifications which are neither phosphorylation, nor sumoylation.

It is found in the host nucleus. The protein localises to the host cytoplasm. Functionally, I-kappa-B- (IkB)-like protein that inhibits the binding of NF-kappa-B to DNA, thereby down-regulating pro-inflammatory cytokine production. Forms a heterodimer with the NF-kappa-B subunit RELA/p65 and prevents the activation of the NF-kappa-B transcription factor. Also inhibits the host calcineurin phosphatase activity, which is required for the induction of nuclear factor of activated T cells(NFAT)-dependent immune response genes. Inhibits calcineurin function, which is required for the induction of nuclear factor of activated T cells (NFAT)-dependent immune response genes. Prevents the binding of substrates to calcineurin without affecting the phosphatase activity. Does not contain the serine residues that are phosphorylated by host IkB kinase and thus is not degraded following stimulation of the NFkB pathway. In African swine fever virus (strain Badajoz 1971 Vero-adapted) (Ba71V), this protein is IkB-like protein (A238L).